Consider the following 378-residue polypeptide: Alkaline elastase YaB (378 aa).

The first 27 residues, 1 to 27, serve as a signal peptide directing secretion; sequence MNKKMGKIVAGTALIISVAFSSSIAQA. Residues 28-110 constitute a propeptide that is removed on maturation; the sequence is AEEAKEKYLI…IEEDAEVTTM (83 aa). Glutamine 111 contacts Ca(2+). Residues 114–377 enclose the Peptidase S8 domain; sequence PWGINRVQAP…SGLVNAEAAT (264 aa). The active-site Charge relay system is aspartate 141. Aspartate 149 serves as a coordination point for Ca(2+). Histidine 171 acts as the Charge relay system in catalysis. Positions 182, 184, 186, 188, 272, 274, and 277 each coordinate Ca(2+). The active-site Charge relay system is the serine 324.

This sequence belongs to the peptidase S8 family. It depends on Ca(2+) as a cofactor.

It is found in the secreted. Functionally, digests elastin efficiently, has a substrate preference for Ala in P1 position. This chain is Alkaline elastase YaB (ale), found in Bacillus sp. (strain YaB).